The following is a 664-amino-acid chain: Transketolase 1 (664 aa).

Residue H26 coordinates substrate. Thiamine diphosphate-binding positions include H66 and 114–116 (GPL). D155 serves as a coordination point for Mg(2+). Positions 156 and 185 each coordinate thiamine diphosphate. Residues N185 and I187 each coordinate Mg(2+). Substrate contacts are provided by H260, R357, and S384. H260 contributes to the thiamine diphosphate binding site. The Proton donor role is filled by E411. F437 contacts thiamine diphosphate. Residues H461, D469, and R520 each coordinate substrate.

It belongs to the transketolase family. In terms of assembly, homodimer. Mg(2+) is required as a cofactor. Ca(2+) serves as cofactor. It depends on Mn(2+) as a cofactor. Requires Co(2+) as cofactor. The cofactor is thiamine diphosphate.

It carries out the reaction D-sedoheptulose 7-phosphate + D-glyceraldehyde 3-phosphate = aldehydo-D-ribose 5-phosphate + D-xylulose 5-phosphate. In terms of biological role, catalyzes the transfer of a two-carbon ketol group from a ketose donor to an aldose acceptor, via a covalent intermediate with the cofactor thiamine pyrophosphate. This Vibrio vulnificus (strain CMCP6) protein is Transketolase 1 (tkt1).